Consider the following 62-residue polypeptide: Large ribosomal subunit protein bL28 (62 aa).

The protein belongs to the bacterial ribosomal protein bL28 family.

This chain is Large ribosomal subunit protein bL28, found in Syntrophomonas wolfei subsp. wolfei (strain DSM 2245B / Goettingen).